The chain runs to 450 residues: Tubulin alpha-4 chain (450 aa).

Position 11 (glutamine 11) interacts with GTP. Lysine 40 is subject to N6-acetyllysine. Residues glutamate 71, glycine 144, threonine 145, threonine 179, asparagine 206, and asparagine 228 each contribute to the GTP site. Position 71 (glutamate 71) interacts with Mg(2+). The active site involves glutamate 254. The segment at 431–450 (DYEEVGAESGEGDEGDEEEY) is disordered.

It belongs to the tubulin family. Dimer of alpha and beta chains. A typical microtubule is a hollow water-filled tube with an outer diameter of 25 nm and an inner diameter of 15 nM. Alpha-beta heterodimers associate head-to-tail to form protofilaments running lengthwise along the microtubule wall with the beta-tubulin subunit facing the microtubule plus end conferring a structural polarity. Microtubules usually have 13 protofilaments but different protofilament numbers can be found in some organisms and specialized cells. It depends on Mg(2+) as a cofactor. Undergoes a tyrosination/detyrosination cycle, the cyclic removal and re-addition of a C-terminal tyrosine residue by the enzymes tubulin tyrosine carboxypeptidase (TTCP) and tubulin tyrosine ligase (TTL), respectively. In terms of processing, acetylation of alpha chains at Lys-40 stabilizes microtubules and affects affinity and processivity of microtubule motors. This modification has a role in multiple cellular functions, ranging from cell motility, cell cycle progression or cell differentiation to intracellular trafficking and signaling.

The protein resides in the cytoplasm. Its subcellular location is the cytoskeleton. It catalyses the reaction GTP + H2O = GDP + phosphate + H(+). Functionally, tubulin is the major constituent of microtubules, a cylinder consisting of laterally associated linear protofilaments composed of alpha- and beta-tubulin heterodimers. Microtubules grow by the addition of GTP-tubulin dimers to the microtubule end, where a stabilizing cap forms. Below the cap, tubulin dimers are in GDP-bound state, owing to GTPase activity of alpha-tubulin. This is Tubulin alpha-4 chain from Gossypium hirsutum (Upland cotton).